The sequence spans 523 residues: Acetyl-CoA hydrolase (523 aa).

CoA is bound at residue 277-281 (GIGNI). E302 serves as the catalytic 5-glutamyl coenzyme A thioester intermediate. Residues N392 and G396 each coordinate CoA.

It belongs to the acetyl-CoA hydrolase/transferase family.

The protein localises to the cytoplasm. The enzyme catalyses acetyl-CoA + H2O = acetate + CoA + H(+). Presumably involved in regulating the intracellular acetyl-CoA pool for fatty acid and cholesterol synthesis and fatty acid oxidation. This is Acetyl-CoA hydrolase (ACH1) from Eremothecium gossypii (strain ATCC 10895 / CBS 109.51 / FGSC 9923 / NRRL Y-1056) (Yeast).